We begin with the raw amino-acid sequence, 133 residues long: Small ribosomal subunit protein uS8 (133 aa).

It belongs to the universal ribosomal protein uS8 family. Part of the 30S ribosomal subunit. Contacts proteins S5 and S12.

In terms of biological role, one of the primary rRNA binding proteins, it binds directly to 16S rRNA central domain where it helps coordinate assembly of the platform of the 30S subunit. The polypeptide is Small ribosomal subunit protein uS8 (Micrococcus luteus (Micrococcus lysodeikticus)).